A 335-amino-acid polypeptide reads, in one-letter code: Dihydroorotate dehydrogenase (quinone) (335 aa).

FMN-binding positions include 59 to 63 (AGLDK) and Thr-83. Lys-63 contributes to the substrate binding site. 108-112 (NRMGF) provides a ligand contact to substrate. FMN is bound by residues Asn-136 and Asn-169. Position 169 (Asn-169) interacts with substrate. Ser-172 (nucleophile) is an active-site residue. Residue Asn-174 participates in substrate binding. Positions 214 and 242 each coordinate FMN. 243–244 (NT) contacts substrate. Residues Gly-265, Gly-294, and 315 to 316 (YS) each bind FMN.

It belongs to the dihydroorotate dehydrogenase family. Type 2 subfamily. In terms of assembly, monomer. The cofactor is FMN.

The protein localises to the cell membrane. The catalysed reaction is (S)-dihydroorotate + a quinone = orotate + a quinol. It functions in the pathway pyrimidine metabolism; UMP biosynthesis via de novo pathway; orotate from (S)-dihydroorotate (quinone route): step 1/1. In terms of biological role, catalyzes the conversion of dihydroorotate to orotate with quinone as electron acceptor. The sequence is that of Dihydroorotate dehydrogenase (quinone) from Neisseria meningitidis serogroup C / serotype 2a (strain ATCC 700532 / DSM 15464 / FAM18).